The sequence spans 347 residues: UDP-N-acetylenolpyruvoylglucosamine reductase (347 aa).

One can recognise an FAD-binding PCMH-type domain in the interval Phe24 to Ala195. Residue Arg171 is part of the active site. Residue Ser247 is the Proton donor of the active site. Glu343 is a catalytic residue.

This sequence belongs to the MurB family. FAD serves as cofactor.

The protein resides in the cytoplasm. The enzyme catalyses UDP-N-acetyl-alpha-D-muramate + NADP(+) = UDP-N-acetyl-3-O-(1-carboxyvinyl)-alpha-D-glucosamine + NADPH + H(+). It functions in the pathway cell wall biogenesis; peptidoglycan biosynthesis. Functionally, cell wall formation. The protein is UDP-N-acetylenolpyruvoylglucosamine reductase of Burkholderia mallei (strain NCTC 10247).